Consider the following 297-residue polypeptide: ER membrane protein complex subunit 2-B (297 aa).

TPR repeat units lie at residues 87–120 (HRVK…DPTN), 155–188 (QEAW…NPHN), and 192–225 (YQQF…NNHS).

The protein belongs to the EMC2 family. Component of the ER membrane protein complex (EMC).

Its subcellular location is the endoplasmic reticulum membrane. Its function is as follows. Part of the endoplasmic reticulum membrane protein complex (EMC) that enables the energy-independent insertion into endoplasmic reticulum membranes of newly synthesized membrane proteins. Preferentially accommodates proteins with transmembrane domains that are weakly hydrophobic or contain destabilizing features such as charged and aromatic residues. Involved in the cotranslational insertion of multi-pass membrane proteins in which stop-transfer membrane-anchor sequences become ER membrane spanning helices. It is also required for the post-translational insertion of tail-anchored/TA proteins in endoplasmic reticulum membranes. By mediating the proper cotranslational insertion of N-terminal transmembrane domains in an N-exo topology, with translocated N-terminus in the lumen of the ER, controls the topology of multi-pass membrane proteins. By regulating the insertion of various proteins in membranes, it is indirectly involved in many cellular processes. The sequence is that of ER membrane protein complex subunit 2-B (emc2-b) from Xenopus laevis (African clawed frog).